A 538-amino-acid chain; its full sequence is Retinoblastoma-binding protein 5 (538 aa).

WD repeat units lie at residues 22–63 and 64–103; these read DCIS…KIIS and AHIH…CDQR. Lys129 participates in a covalent cross-link: Glycyl lysine isopeptide (Lys-Gly) (interchain with G-Cter in SUMO2). WD repeat units lie at residues 148-188, 196-235, 249-291, and 293-331; these read DDDS…LVAS, SNTT…TCGR, VNRT…KILH, and TRGE…NWSA. Position 252 is a phosphothreonine; by CDK1 (Thr252). Residues 330–366 are interaction with ASH2L; that stretch reads SAFAPDFKELDENVEYEERESEFDIEDEDKSEPEQTG. The segment covering 344-360 has biased composition (acidic residues); that stretch reads EYEERESEFDIEDEDKS. Positions 344–377 are disordered; it reads EYEERESEFDIEDEDKSEPEQTGADAAEDEEVDV. Ser350 is modified (phosphoserine). The interaction with WDR5 stretch occupies residues 371–380; the sequence is EDEEVDVTSV. Residues Ser388 and Ser389 each carry the phosphoserine modification. The interval 408–519 is disordered; the sequence is VEDPEENPYG…LPLEGSTKGK (112 aa). The span at 479–490 shows a compositional bias: basic residues; it reads SKKKQAGRPKGS. The span at 491–510 shows a compositional bias: basic and acidic residues; that stretch reads KGKEKDSPFKPKLYKGDRGL. Ser497 carries the phosphoserine; by CDK1 modification. Phosphoserine is present on Ser525.

Component of the SET1 complex, at least composed of the catalytic subunit (SETD1A or SETD1B), WDR5, WDR82, RBBP5, ASH2L/ASH2, CXXC1/CFP1, HCFC1 and DPY30. Core component of several methyltransferase-containing complexes including MLL1/MLL, MLL2/3 (also named ASCOM complex) and MLL4/WBP7. Each complex is at least composed of ASH2L, RBBP5, WDR5, DPY30, one or more specific histone methyltransferases (KMT2A/MLL1, KMT2D/MLL2, KMT2C/MLL3 and KMT2B/MLL4), and the facultative components PAGR1, BACC1, CHD8, E2F6, HCFC1, HCFC2, HSP70, INO80C, KDM6A, KANSL1, LAS1L, MAX, MCRS1, MEN1, MGA, MYST1/MOF, NCOA6, PAXIP1/PTIP, PELP1, PHF20, PRP31, RING2, RUVB1/TIP49A, RUVB2/TIP49B, SENP3, TAF1, TAF4, TAF6, TAF7, TAF9, TEX10 and alpha- and beta-tubulin. Component of a histone methylation complex composed of at least ZNF335, RBBP5, ASH2L and WDR5; the complex may have histone H3-specific methyltransferase activity, however does not have specificity for 'Lys-4' of histone H3. Interacts with ZNF335. Interacts with ASH2L; the interaction is direct. Interacts with WDR5; the interaction is direct. Components of the ZNF335-RBBP5-ASH2L-WDR5 histone methylation complex may associate with components of a nuclear receptor-mediated transcription complex to form a complex at least composed of ZNF335, HCFC1, CCAR2, EMSY, MKI67, RBBP5, ASH2L and WDR5. Within this complex interacts with EMSY. Found in a complex with RBBP5, ASH2L, DPY30, KMT2A, KMT2D and WDR5. Interacts with SETD1A. Interacts with WDR82.

The protein resides in the nucleus. Functionally, in embryonic stem (ES) cells, plays a crucial role in the differentiation potential, particularly along the neural lineage, regulating gene induction and H3 'Lys-4' methylation at key developmental loci, including that mediated by retinoic acid. Does not affect ES cell self-renewal. Component or associated component of some histone methyltransferase complexes which regulates transcription through recruitment of those complexes to gene promoters. As part of the MLL1/MLL complex, involved in mono-, di- and trimethylation at 'Lys-4' of histone H3. Histone H3 'Lys-4' methylation represents a specific tag for epigenetic transcriptional activation. In association with ASH2L and WDR5, stimulates the histone methyltransferase activities of KMT2A, KMT2B, KMT2C, KMT2D, SETD1A and SETD1B. In Mus musculus (Mouse), this protein is Retinoblastoma-binding protein 5 (Rbbp5).